We begin with the raw amino-acid sequence, 428 residues long: Enolase (428 aa).

Glutamine 163 is a (2R)-2-phosphoglycerate binding site. Glutamate 205 serves as the catalytic Proton donor. Residues aspartate 242, glutamate 286, and aspartate 313 each coordinate Mg(2+). (2R)-2-phosphoglycerate-binding residues include lysine 338, arginine 367, serine 368, and lysine 389. Lysine 338 acts as the Proton acceptor in catalysis.

The protein belongs to the enolase family. Mg(2+) serves as cofactor.

The protein resides in the cytoplasm. Its subcellular location is the secreted. The protein localises to the cell surface. The catalysed reaction is (2R)-2-phosphoglycerate = phosphoenolpyruvate + H2O. It participates in carbohydrate degradation; glycolysis; pyruvate from D-glyceraldehyde 3-phosphate: step 4/5. In terms of biological role, catalyzes the reversible conversion of 2-phosphoglycerate (2-PG) into phosphoenolpyruvate (PEP). It is essential for the degradation of carbohydrates via glycolysis. The protein is Enolase of Lactobacillus helveticus (strain DPC 4571).